The following is a 611-amino-acid chain: Elongation factor 4 (611 aa).

The region spanning 12-193 (AVIRNFCIIA…TIVAKVPAPE (182 aa)) is the tr-type G domain. GTP-binding positions include 24-29 (DHGKST) and 140-143 (NKID).

Belongs to the TRAFAC class translation factor GTPase superfamily. Classic translation factor GTPase family. LepA subfamily.

The protein resides in the cell membrane. It carries out the reaction GTP + H2O = GDP + phosphate + H(+). Its function is as follows. Required for accurate and efficient protein synthesis under certain stress conditions. May act as a fidelity factor of the translation reaction, by catalyzing a one-codon backward translocation of tRNAs on improperly translocated ribosomes. Back-translocation proceeds from a post-translocation (POST) complex to a pre-translocation (PRE) complex, thus giving elongation factor G a second chance to translocate the tRNAs correctly. Binds to ribosomes in a GTP-dependent manner. The chain is Elongation factor 4 from Cutibacterium acnes (strain DSM 16379 / KPA171202) (Propionibacterium acnes).